The sequence spans 591 residues: Probable methyltransferase PMT6 (591 aa).

The Cytoplasmic segment spans residues 1–13 (MRGSVIGAERSGQ). The helical; Signal-anchor for type II membrane protein transmembrane segment at 14–34 (TIMVALVLMVGSFYTGSLFGT) threads the bilayer. The Lumenal segment spans residues 35 to 591 (NQPIYVSHPS…FCRKRFWAII (557 aa)). N-linked (GlcNAc...) asparagine glycosylation is found at asparagine 87, asparagine 99, asparagine 146, asparagine 193, asparagine 323, asparagine 436, asparagine 473, and asparagine 515.

This sequence belongs to the methyltransferase superfamily.

It localises to the endoplasmic reticulum membrane. The protein is Probable methyltransferase PMT6 of Arabidopsis thaliana (Mouse-ear cress).